The sequence spans 95 residues: Sec-independent protein translocase protein TatA (95 aa).

The helical transmembrane segment at 1 to 21 threads the bilayer; it reads MGSMSVWHWVIVAVVVMLLFG. The disordered stretch occupies residues 42–95; that stretch reads GMADDETQPNTATSVPPVGPNDPVRTLPHQGAPGTAPQPPHVQPHVPAGDHKAV.

Belongs to the TatA/E family. As to quaternary structure, the Tat system comprises two distinct complexes: a TatABC complex, containing multiple copies of TatA, TatB and TatC subunits, and a separate TatA complex, containing only TatA subunits. Substrates initially bind to the TatABC complex, which probably triggers association of the separate TatA complex to form the active translocon.

The protein localises to the cell inner membrane. Functionally, part of the twin-arginine translocation (Tat) system that transports large folded proteins containing a characteristic twin-arginine motif in their signal peptide across membranes. TatA could form the protein-conducting channel of the Tat system. The protein is Sec-independent protein translocase protein TatA of Methylorubrum extorquens (strain PA1) (Methylobacterium extorquens).